Consider the following 181-residue polypeptide: Swi1-interacting protein swi3 (181 aa).

The disordered stretch occupies residues 1–47 (MSTAASDSGVEKLVEENKREEVKKNEEEKEFDLGLEENPDSVKKPRK). The span at 9–27 (GVEKLVEENKREEVKKNEE) shows a compositional bias: basic and acidic residues. Residues 28-39 (EKEFDLGLEENP) are compositionally biased toward acidic residues.

Belongs to the CSM3 family. In terms of assembly, fork protection complex (FPC) consisting of swi1 and swi3 interacts with mat1 cis-acting sequences and mat1-proximal polar-terminator of replication (RTS1).

It localises to the nucleus. In terms of biological role, forms a fork protection complex (FPC) with swi1. FPC coordinates leading and lagging strand synthesis and moves with the replication fork. It is required for programmed fork-pausing which is necessary for mating-type switching. FPC stabilizes replication forks in a configuration that is recognized by replication checkpoint sensors. It is involved in termination at the mat1-proximal polar-terminator of replication (RTS1) and also required for activation of the Rad53-like checkpoint kinase cds1. The chain is Swi1-interacting protein swi3 (swi3) from Schizosaccharomyces pombe (strain 972 / ATCC 24843) (Fission yeast).